Reading from the N-terminus, the 664-residue chain is Peroxisomal acyl-coenzyme A oxidase 1 (664 aa).

10 residues coordinate FAD: Y135, Q137, T138, S144, G177, R310, Q330, R333, G401, and T422. E424 functions as the Proton acceptor in the catalytic mechanism. D426 contributes to the FAD binding site. C467 and C576 are oxidised to a cystine. Residues 662-664 carry the Microbody targeting signal motif; the sequence is ARL.

This sequence belongs to the acyl-CoA oxidase family. In terms of assembly, homodimer. FAD serves as cofactor. In terms of tissue distribution, expressed mainly in flowers and young seedlings. Lower expression in roots, leaves and bracts.

Its subcellular location is the peroxisome. The catalysed reaction is a 2,3-saturated acyl-CoA + O2 = a (2E)-enoyl-CoA + H2O2. In terms of biological role, catalyzes the desaturation of both long- and medium-chain acyl-CoAs to 2-trans-enoyl-CoAs. Most active with C14-CoA. Activity on long-chain mono-unsaturated substrates is 40% higher than with the corresponding saturated substrates. Seems to be an important factor in the general metabolism of root tips. May be involved in the biosynthesis of jasmonic acid. This Arabidopsis thaliana (Mouse-ear cress) protein is Peroxisomal acyl-coenzyme A oxidase 1.